Here is an 89-residue protein sequence, read N- to C-terminus: Peroxidase (89 aa).

H52 contacts heme. T53 and D68 together coordinate Ca(2+).

Heme b serves as cofactor. Requires Ca(2+) as cofactor.

It is found in the secreted. It carries out the reaction 2 a phenolic donor + H2O2 = 2 a phenolic radical donor + 2 H2O. Its function is as follows. Removal of H(2)O(2), oxidation of toxic reductants, biosynthesis and degradation of lignin, suberization, auxin catabolism, response to environmental stresses such as wounding, pathogen attack and oxidative stress. These functions might be dependent on each isozyme/isoform in each plant tissue. Active against p-coumaryl alcohol, coniferyl alcohol and coniferyl aldehyde. This chain is Peroxidase, found in Ginkgo biloba (Ginkgo).